Reading from the N-terminus, the 136-residue chain is MSALVYFSSSSENTHRFMQRLGLPATRIPLNERERIQVDEPYILVVPSYGGGGMAGAVPRQVIRFLNDEHNRARIRGVIASGNRNFGDAWGCAGDVIAQKCGVPWLYRFELMGTQRDIDNVRKGVNEFWQQLSRSA.

This sequence belongs to the NrdI family.

Probably involved in ribonucleotide reductase function. The polypeptide is Protein NrdI (Salmonella paratyphi B (strain ATCC BAA-1250 / SPB7)).